Here is a 128-residue protein sequence, read N- to C-terminus: Small ribosomal subunit protein uS11 (128 aa).

It belongs to the universal ribosomal protein uS11 family. Part of the 30S ribosomal subunit. Interacts with proteins S7 and S18. Binds to IF-3.

Functionally, located on the platform of the 30S subunit, it bridges several disparate RNA helices of the 16S rRNA. Forms part of the Shine-Dalgarno cleft in the 70S ribosome. The protein is Small ribosomal subunit protein uS11 of Synechococcus sp. (strain JA-2-3B'a(2-13)) (Cyanobacteria bacterium Yellowstone B-Prime).